The chain runs to 471 residues: ATP synthase subunit beta, chloroplastic (471 aa).

151 to 158 (GGAGVGKT) lines the ATP pocket.

This sequence belongs to the ATPase alpha/beta chains family. F-type ATPases have 2 components, CF(1) - the catalytic core - and CF(0) - the membrane proton channel. CF(1) has five subunits: alpha(3), beta(3), gamma(1), delta(1), epsilon(1). CF(0) has four main subunits: a(1), b(1), b'(1) and c(9-12).

Its subcellular location is the plastid. The protein localises to the chloroplast thylakoid membrane. The catalysed reaction is ATP + H2O + 4 H(+)(in) = ADP + phosphate + 5 H(+)(out). Produces ATP from ADP in the presence of a proton gradient across the membrane. The catalytic sites are hosted primarily by the beta subunits. The sequence is that of ATP synthase subunit beta, chloroplastic from Rhodomonas salina (Cryptomonas salina).